The sequence spans 611 residues: UPF0508 protein SCY_3114 (611 aa).

Belongs to the UPF0508 family.

The polypeptide is UPF0508 protein SCY_3114 (Saccharomyces cerevisiae (strain YJM789) (Baker's yeast)).